The following is a 261-amino-acid chain: Cytochrome c oxidase subunit 3 (261 aa).

Over 1 to 15 (MTHQTHAYHMVNPSP) the chain is Mitochondrial matrix. Residues 16–34 (WPLTGALSALLMTFGLIMW) form a helical membrane-spanning segment. Residues 35–40 (FHFNST) lie on the Mitochondrial intermembrane side of the membrane. A helical membrane pass occupies residues 41 to 66 (ALLMLGLTTNMLTMYQWWRDIIREST). Topologically, residues 67–72 (FQGHHT) are mitochondrial matrix. Residues 73-105 (PVVQKGLRYGMILFIISEVLFFTGFFWAFYHSS) traverse the membrane as a helical segment. Residues 106 to 128 (LAPTPELGGCWPPTGIHPLNPLE) lie on the Mitochondrial intermembrane side of the membrane. Residues 129-152 (VPLLNTSVLLASGVSITWAHHSLM) traverse the membrane as a helical segment. Residues 153-155 (EGH) are Mitochondrial matrix-facing. A helical transmembrane segment spans residues 156–183 (RNHMLQALFITIALGVYFTLLQASEYYE). Topologically, residues 184-190 (APFTISD) are mitochondrial intermembrane. The helical transmembrane segment at 191–223 (GVYGSTFFVATGFHGLHVIIGSTFLIVCFFRQL) threads the bilayer. Residues 224–232 (KFHFTSSHH) are Mitochondrial matrix-facing. A helical membrane pass occupies residues 233–256 (FGFEAAAWYWHFVDVVWLFLYVSI). Residues 257–261 (YWWGS) are Mitochondrial intermembrane-facing.

The protein belongs to the cytochrome c oxidase subunit 3 family. Component of the cytochrome c oxidase (complex IV, CIV), a multisubunit enzyme composed of 14 subunits. The complex is composed of a catalytic core of 3 subunits MT-CO1, MT-CO2 and MT-CO3, encoded in the mitochondrial DNA, and 11 supernumerary subunits COX4I, COX5A, COX5B, COX6A, COX6B, COX6C, COX7A, COX7B, COX7C, COX8 and NDUFA4, which are encoded in the nuclear genome. The complex exists as a monomer or a dimer and forms supercomplexes (SCs) in the inner mitochondrial membrane with NADH-ubiquinone oxidoreductase (complex I, CI) and ubiquinol-cytochrome c oxidoreductase (cytochrome b-c1 complex, complex III, CIII), resulting in different assemblies (supercomplex SCI(1)III(2)IV(1) and megacomplex MCI(2)III(2)IV(2)).

The protein resides in the mitochondrion inner membrane. It catalyses the reaction 4 Fe(II)-[cytochrome c] + O2 + 8 H(+)(in) = 4 Fe(III)-[cytochrome c] + 2 H2O + 4 H(+)(out). Its function is as follows. Component of the cytochrome c oxidase, the last enzyme in the mitochondrial electron transport chain which drives oxidative phosphorylation. The respiratory chain contains 3 multisubunit complexes succinate dehydrogenase (complex II, CII), ubiquinol-cytochrome c oxidoreductase (cytochrome b-c1 complex, complex III, CIII) and cytochrome c oxidase (complex IV, CIV), that cooperate to transfer electrons derived from NADH and succinate to molecular oxygen, creating an electrochemical gradient over the inner membrane that drives transmembrane transport and the ATP synthase. Cytochrome c oxidase is the component of the respiratory chain that catalyzes the reduction of oxygen to water. Electrons originating from reduced cytochrome c in the intermembrane space (IMS) are transferred via the dinuclear copper A center (CU(A)) of subunit 2 and heme A of subunit 1 to the active site in subunit 1, a binuclear center (BNC) formed by heme A3 and copper B (CU(B)). The BNC reduces molecular oxygen to 2 water molecules using 4 electrons from cytochrome c in the IMS and 4 protons from the mitochondrial matrix. The polypeptide is Cytochrome c oxidase subunit 3 (MT-CO3) (Tragelaphus oryx (Eland)).